Reading from the N-terminus, the 43-residue chain is Cytochrome b559 subunit beta (43 aa).

The chain crosses the membrane as a helical span at residues 18–34 (WLAVHGLAIPTVFFLGG). Position 22 (histidine 22) interacts with heme.

The protein belongs to the PsbE/PsbF family. In terms of assembly, heterodimer of an alpha subunit and a beta subunit. PSII is composed of 1 copy each of membrane proteins PsbA, PsbB, PsbC, PsbD, PsbE, PsbF, PsbH, PsbI, PsbJ, PsbK, PsbL, PsbM, PsbT, PsbX, PsbY, PsbZ, Psb30/Ycf12, at least 3 peripheral proteins of the oxygen-evolving complex and a large number of cofactors. It forms dimeric complexes. Heme b is required as a cofactor.

The protein resides in the plastid. Its subcellular location is the chloroplast thylakoid membrane. Functionally, this b-type cytochrome is tightly associated with the reaction center of photosystem II (PSII). PSII is a light-driven water:plastoquinone oxidoreductase that uses light energy to abstract electrons from H(2)O, generating O(2) and a proton gradient subsequently used for ATP formation. It consists of a core antenna complex that captures photons, and an electron transfer chain that converts photonic excitation into a charge separation. This chain is Cytochrome b559 subunit beta, found in Thalassiosira pseudonana (Marine diatom).